Consider the following 20-residue polypeptide: Apidaecin 2+ (20 aa).

A compositionally biased stretch (pro residues) spans 1–13 (GKPNKPRPAPIKP). Residues 1–20 (GKPNKPRPAPIKPRPPHPRL) form a disordered region.

The protein localises to the secreted. Antimicrobial peptide active against many Gram-negative enterobacterial and plant-associated bacterial species. Not active against other bacterial species like H.pylori, P.mirabilis, B.pertussis or N.gonorrhoeae. This chain is Apidaecin 2+, found in Pimpla disparis (Parasitic wasp).